The following is a 71-amino-acid chain: Cell division protein ZapB (71 aa).

The stretch at 5-67 forms a coiled coil; it reads LEVLEQLESK…RALLGKMEQM (63 aa).

Belongs to the ZapB family. Homodimer. The ends of the coiled-coil dimer bind to each other, forming polymers. Interacts with FtsZ.

The protein localises to the cytoplasm. Non-essential, abundant cell division factor that is required for proper Z-ring formation. It is recruited early to the divisome by direct interaction with FtsZ, stimulating Z-ring assembly and thereby promoting cell division earlier in the cell cycle. Its recruitment to the Z-ring requires functional FtsA or ZipA. This chain is Cell division protein ZapB, found in Aeromonas salmonicida (strain A449).